A 743-amino-acid polypeptide reads, in one-letter code: Dolichyl-phosphate-mannose--protein mannosyltransferase 5 (743 aa).

Residues 1-46 (MNKEHLLKVDPIPDVTIKRGPLRSFLITKPCDNLSSLRTVTSSKEK) lie on the Lumenal side of the membrane. Asparagine 33 carries N-linked (GlcNAc...) asparagine glycosylation. A helical membrane pass occupies residues 47 to 67 (LLVGCLLIFTAIVRLHNISLP). At 68 to 129 (NSVVFGENEV…IGTEYTANVP (62 aa)) the chain is on the cytoplasmic side. The helical transmembrane segment at 130-150 (YVAMRFFSATLGIVSVLVLYL) threads the bilayer. Topologically, residues 151 to 158 (TLRVSGVK) are lumenal. The chain crosses the membrane as a helical span at residues 159-179 (IAVAAICAVCFAIENSFVTLS). A topological domain (cytoplasmic) is located at residue arginine 180. A helical transmembrane segment spans residues 181–201 (FTLIEGPFVFFMACAVYFFRR). The Lumenal portion of the chain corresponds to 202–231 (SELYLPNSCKANKSLLAASIALGFAVSSKW). Asparagine 213 is a glycosylation site (N-linked (GlcNAc...) asparagine). A helical membrane pass occupies residues 232–252 (AGLFTIAWAGIIVLWRVWFMI). Topologically, residues 253–264 (GDLSRPIGSSIK) are cytoplasmic. A helical membrane pass occupies residues 265–285 (YMAFQFTCLLAIPAFIYFLIF). Residues 286–583 (SVHIKTLNVN…GREVYFLGNA (298 aa)) are Lumenal-facing. The 55-residue stretch at 320–374 (VAEVAVGSAVSLNHVGTAGGYLHSHLHNYPAGSMQQQVTLYPHIDQNNKWIIELA) folds into the MIR 1 domain. Asparagine 380 and asparagine 386 each carry an N-linked (GlcNAc...) asparagine glycan. MIR domains are found at residues 384–444 (FQNL…IEID) and 454–510 (QEHI…IEEN). A helical transmembrane segment spans residues 584 to 604 (VLWWSVTAFICTFIIGVAVEL). Residues 605–623 (LAWKLGVNILRDKHIINFH) lie on the Cytoplasmic side of the membrane. The helical transmembrane segment at 624-644 (YQVFQYLLGFAAHYFPYFFVG) threads the bilayer. Residues 645-646 (QK) are Lumenal-facing. The chain crosses the membrane as a helical span at residues 647-667 (LFLYDYLPAYYFGILAFGHAL). At 668–683 (DLISTYISNKRNNTGY) the chain is on the cytoplasmic side. Residues 684-704 (IVVAIFMVVCFYFFSEHSPLI) traverse the membrane as a helical segment. The Lumenal portion of the chain corresponds to 705-743 (YATGWSSNLCKRSKWLGSWDFYCNSLLLSDSHYELNAES).

It belongs to the glycosyltransferase 39 family. As to quaternary structure, PMT3 and PMT5 form a functional heterodimer. Also forms a minor complex with PMT2.

The protein localises to the endoplasmic reticulum membrane. The enzyme catalyses a di-trans,poly-cis-dolichyl beta-D-mannosyl phosphate + L-seryl-[protein] = 3-O-(alpha-D-mannosyl)-L-seryl-[protein] + a di-trans,poly-cis-dolichyl phosphate + H(+). It carries out the reaction a di-trans,poly-cis-dolichyl beta-D-mannosyl phosphate + L-threonyl-[protein] = 3-O-(alpha-D-mannosyl)-L-threonyl-[protein] + a di-trans,poly-cis-dolichyl phosphate + H(+). The protein operates within protein modification; protein glycosylation. Its function is as follows. Protein O-mannosyltransferase involved in O-glycosylation which is essential for cell wall rigidity. Forms a heterodimeric complex with PMT3 and more rarely with PMT2 to transfer mannose from Dol-P-mannose to Ser or Thr residues on proteins. This Saccharomyces cerevisiae (strain ATCC 204508 / S288c) (Baker's yeast) protein is Dolichyl-phosphate-mannose--protein mannosyltransferase 5.